Here is a 95-residue protein sequence, read N- to C-terminus: Aspartyl/glutamyl-tRNA(Asn/Gln) amidotransferase subunit C (95 aa).

The protein belongs to the GatC family. As to quaternary structure, heterotrimer of A, B and C subunits.

The enzyme catalyses L-glutamyl-tRNA(Gln) + L-glutamine + ATP + H2O = L-glutaminyl-tRNA(Gln) + L-glutamate + ADP + phosphate + H(+). The catalysed reaction is L-aspartyl-tRNA(Asn) + L-glutamine + ATP + H2O = L-asparaginyl-tRNA(Asn) + L-glutamate + ADP + phosphate + 2 H(+). Allows the formation of correctly charged Asn-tRNA(Asn) or Gln-tRNA(Gln) through the transamidation of misacylated Asp-tRNA(Asn) or Glu-tRNA(Gln) in organisms which lack either or both of asparaginyl-tRNA or glutaminyl-tRNA synthetases. The reaction takes place in the presence of glutamine and ATP through an activated phospho-Asp-tRNA(Asn) or phospho-Glu-tRNA(Gln). In Bradyrhizobium sp. (strain ORS 278), this protein is Aspartyl/glutamyl-tRNA(Asn/Gln) amidotransferase subunit C.